The primary structure comprises 360 residues: MTVTALGVPTVRGRSEGSAIASDAPGDGPLLDRFGRSATDLRVSLTDRCNLRCGYCMPAEGLNWLPGEQLLGPAELARLLRIAVTRLGITSVRFTGGEPLLARHLEEVVAAAAQLRPRPEISLTTNGVGLAKRAAALAEAGLDRVNVSLDTVDRAHFAAITRRDRLTDVLDGLAGARAAGLTPVKVNAVLDPETGRQDVVELLRFCLEQGYQLRVIEQMPLDAGHQWRRNALLGSDDVLAALQPHFRLRPDPAPRGSAPAELWLVDAGPDTPAGKFGVIASVSHAFCSTCDRTRLTADGQVRSCLFSTEETDLRGLLRAGAGDEAIEAAWRSAMWAKPAGHGINNPDFVQPQRPMSAIGG.

Positions 33–251 (RFGRSATDLR…LQPHFRLRPD (219 aa)) constitute a Radical SAM core domain. Arginine 42 lines the GTP pocket. Positions 49 and 53 each coordinate [4Fe-4S] cluster. Tyrosine 55 is an S-adenosyl-L-methionine binding site. Cysteine 56 serves as a coordination point for [4Fe-4S] cluster. Residue arginine 93 participates in GTP binding. S-adenosyl-L-methionine is bound at residue glycine 97. Position 124 (threonine 124) interacts with GTP. Serine 148 contributes to the S-adenosyl-L-methionine binding site. Lysine 185 contacts GTP. Residue methionine 219 coordinates S-adenosyl-L-methionine. [4Fe-4S] cluster-binding residues include cysteine 287 and cysteine 290. 292–294 (RTR) contributes to the GTP binding site. Cysteine 304 contributes to the [4Fe-4S] cluster binding site.

This sequence belongs to the radical SAM superfamily. MoaA family. As to quaternary structure, monomer and homodimer. The cofactor is [4Fe-4S] cluster.

It catalyses the reaction GTP + AH2 + S-adenosyl-L-methionine = (8S)-3',8-cyclo-7,8-dihydroguanosine 5'-triphosphate + 5'-deoxyadenosine + L-methionine + A + H(+). It participates in cofactor biosynthesis; molybdopterin biosynthesis. Catalyzes the cyclization of GTP to (8S)-3',8-cyclo-7,8-dihydroguanosine 5'-triphosphate. This chain is GTP 3',8-cyclase, found in Mycobacterium marinum (strain ATCC BAA-535 / M).